The chain runs to 303 residues: Sulfotransferase 6B1 (303 aa).

Residue lysine 65 to tryptophan 70 coordinates 3'-phosphoadenylyl sulfate. Histidine 118 (proton acceptor) is an active-site residue. 3'-phosphoadenylyl sulfate-binding positions include arginine 140, serine 148, tyrosine 203, serine 237–methionine 242, and arginine 259–glycine 261.

This sequence belongs to the sulfotransferase 1 family.

It localises to the cytoplasm. It is found in the cytosol. It carries out the reaction thyroxine + 3'-phosphoadenylyl sulfate = thyroxine sulfate + adenosine 3',5'-bisphosphate + H(+). Functionally, sulfotransferase that utilizes 3'-phospho-5'-adenylyl sulfate (PAPS) as sulfonate donor to catalyze the sulfate conjugation of thyroxine. Involved in the metabolism of thyroxine. In Pan troglodytes (Chimpanzee), this protein is Sulfotransferase 6B1 (SULT6B1).